The chain runs to 452 residues: Maltoporin (452 aa).

The signal sequence occupies residues 1-25 (MMITLRKLPLAVAVAAGVMSAQAMA).

It belongs to the porin LamB (TC 1.B.3) family. Homotrimer formed of three 18-stranded antiparallel beta-barrels, containing three independent channels.

The protein localises to the cell outer membrane. It catalyses the reaction beta-maltose(in) = beta-maltose(out). In terms of biological role, involved in the transport of maltose and maltodextrins. This is Maltoporin from Salmonella paratyphi A (strain ATCC 9150 / SARB42).